Consider the following 500-residue polypeptide: Cytochrome P450 71B34 (500 aa).

The helical transmembrane segment at 1 to 21 (MTNIWLLSLIFVICILVAVFN) threads the bilayer. Position 440 (Cys440) interacts with heme.

This sequence belongs to the cytochrome P450 family. Requires heme as cofactor.

Its subcellular location is the membrane. The chain is Cytochrome P450 71B34 (CYP71B34) from Arabidopsis thaliana (Mouse-ear cress).